A 545-amino-acid polypeptide reads, in one-letter code: CTP synthase (545 aa).

The segment at 1–266 (MATNYIFVTG…DSFVCDRFRL (266 aa)) is amidoligase domain. Ser14 is a binding site for CTP. Ser14 contributes to the UTP binding site. ATP is bound by residues 15-20 (SLGKGI) and Asp72. Mg(2+)-binding residues include Asp72 and Glu140. Residues 147–149 (DIE), 187–192 (KTKPTQ), and Lys223 each bind CTP. Residues 187 to 192 (KTKPTQ) and Lys223 each bind UTP. Position 239 to 241 (239 to 241 (KDV)) interacts with ATP. Positions 291-542 (TIGMVGKYVE…VAAAKAYQDS (252 aa)) constitute a Glutamine amidotransferase type-1 domain. L-glutamine is bound at residue Gly352. Residue Cys379 is the Nucleophile; for glutamine hydrolysis of the active site. Residues 380–383 (LGMQ), Glu403, and Arg470 each bind L-glutamine. Catalysis depends on residues His515 and Glu517.

The protein belongs to the CTP synthase family. Homotetramer.

The catalysed reaction is UTP + L-glutamine + ATP + H2O = CTP + L-glutamate + ADP + phosphate + 2 H(+). The enzyme catalyses L-glutamine + H2O = L-glutamate + NH4(+). It carries out the reaction UTP + NH4(+) + ATP = CTP + ADP + phosphate + 2 H(+). It functions in the pathway pyrimidine metabolism; CTP biosynthesis via de novo pathway; CTP from UDP: step 2/2. Its activity is regulated as follows. Allosterically activated by GTP, when glutamine is the substrate; GTP has no effect on the reaction when ammonia is the substrate. The allosteric effector GTP functions by stabilizing the protein conformation that binds the tetrahedral intermediate(s) formed during glutamine hydrolysis. Inhibited by the product CTP, via allosteric rather than competitive inhibition. Its function is as follows. Catalyzes the ATP-dependent amination of UTP to CTP with either L-glutamine or ammonia as the source of nitrogen. Regulates intracellular CTP levels through interactions with the four ribonucleotide triphosphates. This is CTP synthase from Haemophilus ducreyi (strain 35000HP / ATCC 700724).